Here is a 466-residue protein sequence, read N- to C-terminus: Soluble pyridine nucleotide transhydrogenase (466 aa).

FAD is bound at residue 36-45 (ERYHQVGGGC).

It belongs to the class-I pyridine nucleotide-disulfide oxidoreductase family. Requires FAD as cofactor.

The protein resides in the cytoplasm. It catalyses the reaction NAD(+) + NADPH = NADH + NADP(+). Conversion of NADPH, generated by peripheral catabolic pathways, to NADH, which can enter the respiratory chain for energy generation. This chain is Soluble pyridine nucleotide transhydrogenase, found in Colwellia psychrerythraea (strain 34H / ATCC BAA-681) (Vibrio psychroerythus).